Here is a 432-residue protein sequence, read N- to C-terminus: Solute carrier family 35 member F5 (432 aa).

The signal sequence occupies residues methionine 1–glycine 33. Serine 116 bears the Phosphoserine mark. Helical transmembrane passes span isoleucine 152–serine 172, alanine 177–phenylalanine 197, phenylalanine 205–leucine 225, threonine 236–isoleucine 256, methionine 270–leucine 290, valine 304–tryptophan 324, phenylalanine 329–isoleucine 349, and tryptophan 361–cysteine 381. The EamA domain occupies phenylalanine 161–leucine 225.

This sequence belongs to the SLC35F solute transporter family.

It is found in the membrane. Putative solute transporter. The chain is Solute carrier family 35 member F5 (SLC35F5) from Macaca fascicularis (Crab-eating macaque).